The primary structure comprises 179 residues: MYPKAKATRVCSDAARINDLPDDLLATVLSFVPTKDAVATSILSKRWRPIWKRAVNLESDCVELCAICALDCFSFILMRSSKLRVLRFKQKRCCCNLLREKWKQPDFVPLSLYRSLEAFEWIGFKGREKTEKKAAFHILRNACNLKTMAITTSNTFQENTNILIDFDRMCTNCRISIKP.

Residues 14–60 form the F-box domain; sequence AARINDLPDDLLATVLSFVPTKDAVATSILSKRWRPIWKRAVNLESD. Residues 101–152 enclose the FBD domain; that stretch reads KWKQPDFVPLSLYRSLEAFEWIGFKGREKTEKKAAFHILRNACNLKTMAITT.

This chain is Putative FBD-associated F-box protein At3g12840, found in Arabidopsis thaliana (Mouse-ear cress).